The chain runs to 267 residues: Cilia- and flagella-associated protein 300 (267 aa).

Belongs to the CFAP300 family. Interacts with DNAAF2.

Its subcellular location is the cytoplasm. The protein resides in the cytoskeleton. The protein localises to the cilium axoneme. In terms of biological role, cilium- and flagellum-specific protein that plays a role in axonemal structure organization and motility. May play a role in outer and inner dynein arm assembly. This Rattus norvegicus (Rat) protein is Cilia- and flagella-associated protein 300.